The primary structure comprises 108 residues: MAEEFVQQRLANNKVTIFVKFTCPFCRNALDILNKFSFKRGAYEIVDIKEFKPENELRDYFEQITGGRTVPRIFFGKTSIGGYSDMLEIDNMDALGDILSSIGVLRTC.

The region spanning 3–106 (EEFVQQRLAN…DILSSIGVLR (104 aa)) is the Glutaredoxin domain. C23 and C26 are oxidised to a cystine.

It belongs to the glutaredoxin family.

It localises to the virion. Has thioltransferase and dehydroascorbate reductase activities. This chain is Glutaredoxin-1 (OPG075), found in Camelpox virus (strain M-96).